We begin with the raw amino-acid sequence, 90 residues long: Small ribosomal subunit protein uS19 (90 aa).

The protein belongs to the universal ribosomal protein uS19 family.

Its function is as follows. Protein S19 forms a complex with S13 that binds strongly to the 16S ribosomal RNA. This Methylococcus capsulatus (strain ATCC 33009 / NCIMB 11132 / Bath) protein is Small ribosomal subunit protein uS19.